The following is a 446-amino-acid chain: N-succinylarginine dihydrolase (446 aa).

Substrate contacts are provided by residues 19-28 (AGLSYGNVAS), Asn110, and 137-138 (HR). Residue Glu174 is part of the active site. Arg214 is a binding site for substrate. Residue His250 is part of the active site. 2 residues coordinate substrate: Asp252 and Asn363. Cys369 serves as the catalytic Nucleophile.

It belongs to the succinylarginine dihydrolase family. As to quaternary structure, homodimer.

It carries out the reaction N(2)-succinyl-L-arginine + 2 H2O + 2 H(+) = N(2)-succinyl-L-ornithine + 2 NH4(+) + CO2. The protein operates within amino-acid degradation; L-arginine degradation via AST pathway; L-glutamate and succinate from L-arginine: step 2/5. Catalyzes the hydrolysis of N(2)-succinylarginine into N(2)-succinylornithine, ammonia and CO(2). This is N-succinylarginine dihydrolase from Pseudoalteromonas atlantica (strain T6c / ATCC BAA-1087).